Reading from the N-terminus, the 180-residue chain is Fanconi anemia core complex-associated protein 20 (180 aa).

The span at Met-1–Arg-17 shows a compositional bias: basic residues. Disordered regions lie at residues Met-1–Trp-28 and Gly-106–Gln-135. 2 positions are modified to phosphoserine: Ser-113 and Ser-137. The UBZ2-type zinc-finger motif lies at Leu-144–Trp-180. Residues Cys-147, Cys-150, His-166, and Cys-170 each contribute to the Zn(2+) site.

As to quaternary structure, component of the Fanconi anemia (FA) complex. Interacts with FANCA; interaction is direct. Interacts with REV1. Reported to bind monoubiquitinated REV1; however it binds better to non-ubiquitinated REV1.

It localises to the nucleus. Its subcellular location is the chromosome. Functionally, component of the Fanconi anemia (FA) complex required to recruit the FA complex to DNA interstrand cross-links (ICLs) and promote ICLs repair. Following DNA damage recognizes and binds 'Lys-63'-linked ubiquitin generated by RNF8 at ICLs and recruits other components of the FA complex. Promotes translesion synthesis via interaction with REV1. This Homo sapiens (Human) protein is Fanconi anemia core complex-associated protein 20.